Here is a 118-residue protein sequence, read N- to C-terminus: UPF0102 protein Lxx14785 (118 aa).

Belongs to the UPF0102 family.

The polypeptide is UPF0102 protein Lxx14785 (Leifsonia xyli subsp. xyli (strain CTCB07)).